The chain runs to 209 residues: Ribonuclease HII (209 aa).

Residues 20–209 (GLVAGVDEAG…VARSLPGACR (190 aa)) enclose the RNase H type-2 domain. Residues Asp-26, Glu-27, and Asp-118 each coordinate a divalent metal cation.

This sequence belongs to the RNase HII family. Mn(2+) serves as cofactor. It depends on Mg(2+) as a cofactor.

The protein localises to the cytoplasm. The catalysed reaction is Endonucleolytic cleavage to 5'-phosphomonoester.. Functionally, endonuclease that specifically degrades the RNA of RNA-DNA hybrids. The polypeptide is Ribonuclease HII (Verminephrobacter eiseniae (strain EF01-2)).